The primary structure comprises 151 residues: Small ribosomal subunit protein uS15 (151 aa).

K27 is modified (N6-acetyllysine; alternate). K27 carries the post-translational modification N6-succinyllysine; alternate. K27 is covalently cross-linked (Glycyl lysine isopeptide (Lys-Gly) (interchain with G-Cter in ubiquitin)). Residue S30 is modified to Phosphoserine. Position 34 is an N6-succinyllysine (K34). Residue Y38 is modified to Phosphotyrosine. Residue K43 forms a Glycyl lysine isopeptide (Lys-Gly) (interchain with G-Cter in SUMO2) linkage.

It belongs to the universal ribosomal protein uS15 family. Component of the small ribosomal subunit. Part of the small subunit (SSU) processome, composed of more than 70 proteins and the RNA chaperone small nucleolar RNA (snoRNA) U3. In terms of processing, ubiquitinated at Lys-27 by RNF14 and RNF25 in response to ribosome collisions (ribosome stalling).

It is found in the cytoplasm. The protein resides in the nucleus. Its subcellular location is the nucleolus. Its function is as follows. Component of the small ribosomal subunit. The ribosome is a large ribonucleoprotein complex responsible for the synthesis of proteins in the cell. Part of the small subunit (SSU) processome, first precursor of the small eukaryotic ribosomal subunit. During the assembly of the SSU processome in the nucleolus, many ribosome biogenesis factors, an RNA chaperone and ribosomal proteins associate with the nascent pre-rRNA and work in concert to generate RNA folding, modifications, rearrangements and cleavage as well as targeted degradation of pre-ribosomal RNA by the RNA exosome. The sequence is that of Small ribosomal subunit protein uS15 from Homo sapiens (Human).